A 410-amino-acid chain; its full sequence is Diguanylate cyclase DgcM (410 aa).

2 consecutive PAS domains span residues 3 to 70 and 129 to 198; these read THNF…NQHD and GFYA…HLPG. The region spanning 199–251 is the PAC domain; it reads GHKPLNFIHKLADGSTRHVQTYAGPIEIYGDKLMLCIVHDITEQKRLEEQLEH. The 128-residue stretch at 283–410 folds into the GGDEF domain; that stretch reads QDYSLLLIDT…NDGRNRVLAA (128 aa). D291 is a Mg(2+) binding site. Residues N299, H304, and D308 each contribute to the substrate site. A Mg(2+)-binding site is contributed by E334. The Proton acceptor role is filled by E334.

Requires Mg(2+) as cofactor.

The enzyme catalyses 2 GTP = 3',3'-c-di-GMP + 2 diphosphate. It functions in the pathway purine metabolism; 3',5'-cyclic di-GMP biosynthesis. In terms of biological role, part of a signaling cascade that regulates curli biosynthesis. The cascade is composed of two cyclic-di-GMP (c-di-GMP) control modules, in which c-di-GMP controlled by the DgcE/PdeH pair (module I) regulates the activity of the DgcM/PdeR pair (module II), which in turn regulates activity of the transcription factor MlrA and expression of the master biofilm regulator csgD. The chain is Diguanylate cyclase DgcM from Escherichia coli O157:H7.